Consider the following 448-residue polypeptide: Metacaspase-1 (448 aa).

Positions 1-129 (MFPGQGRHTY…GHYSRPPTDS (129 aa)) are disordered. Residues 10–44 (YGGQQSNYSNQQQGYDQGYNQGYGQAYGQEYNQGY) are compositionally biased toward low complexity. The span at 61–70 (SGPPPGPPPG) shows a compositional bias: pro residues. The span at 99-114 (YGNNQTRGSGNEQNYG) shows a compositional bias: polar residues. Active-site residues include H231 and C292.

It belongs to the peptidase C14B family.

Involved in cell death (apoptosis). This is Metacaspase-1 (MCA1) from Candida albicans (strain SC5314 / ATCC MYA-2876) (Yeast).